The primary structure comprises 560 residues: Interferon alpha/beta receptor 1 (560 aa).

The N-terminal stretch at 1-24 (MLGLLGATTLMLVAGAPWVLPAGG) is a signal peptide. Residues 25–437 (ADLRSPENVV…EKTKPGSTSQ (413 aa)) lie on the Extracellular side of the membrane. 4 consecutive Fibronectin type-III domains span residues 29-125 (SPEN…FQEA), 133-224 (HLEA…INTT), 231-329 (SPEN…TEMQ), and 333-433 (FPPV…TKPG). N55 is a glycosylation site (N-linked (GlcNAc...) asparagine). Residues C76 and C84 are joined by a disulfide bond. Residues N85, N108, and N172 are each glycosylated (N-linked (GlcNAc...) asparagine). C199 and C220 are joined by a disulfide. N-linked (GlcNAc...) asparagine glycosylation is found at N222, N249, and N254. A disulfide bond links C283 and C291. 3 N-linked (GlcNAc...) asparagine glycosylation sites follow: N313, N377, and N417. C404 and C427 are oxidised to a cystine. Residues 438-458 (AWLIAGILSAILLFPAVFYGV) form a helical membrane-spanning segment. Topologically, residues 459 to 560 (KVVSRCINYV…GEEILRQAAV (102 aa)) are cytoplasmic. The S-palmitoyl cysteine moiety is linked to residue C464. Phosphotyrosine; by TYK2 is present on residues Y467 and Y482. The interval 492-501 (LLSTSEEQTE) is important for interaction with TYK2. Phosphoserine occurs at positions 496 and 536. Residues 520–560 (QIDDNHSRCSSQTNRDSGVYSNEDENSGSKIGEEILRQAAV) form a disordered region. Residues 527–539 (RCSSQTNRDSGVY) are compositionally biased toward polar residues. Residues 550-560 (IGEEILRQAAV) are compositionally biased toward basic and acidic residues.

The protein belongs to the type II cytokine receptor family. In terms of assembly, heterodimer with IFNAR2; forming the receptor for type I interferon. Interacts with TYK2. Interacts with STAT1 and STAT2; the interaction requires its phosphorylation at Tyr-482. Interacts (serine-phosphorylated form) with FBXW11, the substrate recognition component of a SCF (SKP1-CUL1-F-box protein) E3 ubiquitin-protein ligase complex. Interacts with SHMT2; this promotes interaction with ABRAXAS2 and the BRISC complex. Interacts with TRIM10; this interaction prevents association between IFNAR1 and TYK2. In terms of processing, ubiquitinated, leading to its internalization and degradation. Polyubiquitinated via 'Lys-48'-linked and 'Lys-63'-linked ubiquitin chains, leading to receptor internalization and lysosomal degradation. The 'Lys-63'-linked ubiquitin chains are cleaved off by the BRISC complex. Phosphorylated on tyrosine residues in response to interferon-binding: phosphorylation by TYK2 tyrosine kinase creates docking sites for STAT proteins. Phosphorylated on serine residues in response to interferon binding; this promotes interaction with FBXW11 and ubiquitination. Post-translationally, palmitoylation at Cys-464 is required for the activation of STAT1 and STAT2.

It is found in the cell membrane. The protein resides in the late endosome. It localises to the lysosome. Together with IFNAR2, forms the heterodimeric receptor for type I interferons (including interferons alpha, beta, epsilon, omega and kappa). Type I interferon binding activates the JAK-STAT signaling cascade, resulting in transcriptional activation or repression of interferon-regulated genes that encode the effectors of the interferon response. Mechanistically, type I interferon-binding brings the IFNAR1 and IFNAR2 subunits into close proximity with one another, driving their associated Janus kinases (JAKs) (TYK2 bound to IFNAR1 and JAK1 bound to IFNAR2) to cross-phosphorylate one another. The activated kinases phosphorylate specific tyrosine residues on the intracellular domains of IFNAR1 and IFNAR2, forming docking sites for the STAT transcription factors. STAT proteins are then phosphorylated by the JAKs, promoting their translocation into the nucleus to regulate expression of interferon-regulated genes. Can also act independently of IFNAR2: form an active IFNB1 receptor by itself and activate a signaling cascade that does not involve activation of the JAK-STAT pathway. The protein is Interferon alpha/beta receptor 1 (IFNAR1) of Sus scrofa (Pig).